The following is a 296-amino-acid chain: UDP-N-acetylenolpyruvoylglucosamine reductase (296 aa).

The region spanning 18–189 is the FAD-binding PCMH-type domain; sequence LGGRALAEVR…TGADIVLRRG (172 aa). R166 is a catalytic residue. C218 acts as the Proton donor in catalysis. E289 is a catalytic residue.

The protein belongs to the MurB family. Requires FAD as cofactor.

Its subcellular location is the cytoplasm. It carries out the reaction UDP-N-acetyl-alpha-D-muramate + NADP(+) = UDP-N-acetyl-3-O-(1-carboxyvinyl)-alpha-D-glucosamine + NADPH + H(+). It participates in cell wall biogenesis; peptidoglycan biosynthesis. In terms of biological role, cell wall formation. The chain is UDP-N-acetylenolpyruvoylglucosamine reductase from Nitratidesulfovibrio vulgaris (strain ATCC 29579 / DSM 644 / CCUG 34227 / NCIMB 8303 / VKM B-1760 / Hildenborough) (Desulfovibrio vulgaris).